The sequence spans 348 residues: Probable malate dehydrogenase 2, mitochondrial (348 aa).

Residues 1 to 9 (MNKILTRSF) constitute a mitochondrion transit peptide. 31–37 (GASGQIG) contributes to the NAD(+) binding site. 2 residues coordinate substrate: R112 and R118. Residues N125, Q132, and 150 to 152 (VGN) contribute to the NAD(+) site. Residues N152 and R183 each contribute to the substrate site. H208 functions as the Proton acceptor in the catalytic mechanism.

The protein belongs to the LDH/MDH superfamily. MDH type 2 family. As to quaternary structure, homodimer.

Its subcellular location is the mitochondrion. The enzyme catalyses (S)-malate + NAD(+) = oxaloacetate + NADH + H(+). Catalyzes the reversible oxidation of malate to oxaloacetate. This is Probable malate dehydrogenase 2, mitochondrial (mdhB) from Dictyostelium discoideum (Social amoeba).